The chain runs to 336 residues: Malate dehydrogenase, cytoplasmic (336 aa).

NAD(+)-binding positions include 11–17 and Asp42; that span reads GAAGQIG. Substrate contacts are provided by Arg92 and Arg98. Residues Asn105, Gln112, and 129-131 each bind NAD(+); that span reads VGN. Substrate is bound by residues Asn131 and Arg163. Residue His188 is the Proton acceptor of the active site.

Belongs to the LDH/MDH superfamily. MDH type 2 family. In terms of assembly, homodimer.

The protein localises to the cytoplasm. The catalysed reaction is (S)-malate + NAD(+) = oxaloacetate + NADH + H(+). Its function is as follows. Catalyzes the reversible conversion of (S)-malate to oxaloacetate in the cytoplasm where oxaloacetate is used for gluconeogenesis. The protein is Malate dehydrogenase, cytoplasmic of Caenorhabditis elegans.